The following is a 114-amino-acid chain: Non-specific lipid-transfer protein 2 (114 aa).

A signal peptide spans 1 to 23; that stretch reads MEMVNKIACFVLLCMVVVAPHAE. 4 cysteine pairs are disulfide-bonded: Cys-27/Cys-73, Cys-37/Cys-50, Cys-51/Cys-96, and Cys-71/Cys-110.

This sequence belongs to the plant LTP family.

Functionally, plant non-specific lipid-transfer proteins transfer phospholipids as well as galactolipids across membranes. May play a role in wax or cutin deposition in the cell walls of expanding epidermal cells and certain secretory tissues. The protein is Non-specific lipid-transfer protein 2 of Solanum chilense (Tomato).